A 505-amino-acid polypeptide reads, in one-letter code: 2-isopropylmalate synthase (505 aa).

Residues 5–267 (VYIFDTTLRD…YTNIKTEEIY (263 aa)) enclose the Pyruvate carboxyltransferase domain. Mn(2+) contacts are provided by aspartate 14, histidine 202, histidine 204, and asparagine 238. Residues 391-505 (TLEYLHISSG…VNKLIWDSQK (115 aa)) are regulatory domain.

The protein belongs to the alpha-IPM synthase/homocitrate synthase family. LeuA type 1 subfamily. Homodimer. Mn(2+) is required as a cofactor.

The protein localises to the cytoplasm. It catalyses the reaction 3-methyl-2-oxobutanoate + acetyl-CoA + H2O = (2S)-2-isopropylmalate + CoA + H(+). It functions in the pathway amino-acid biosynthesis; L-leucine biosynthesis; L-leucine from 3-methyl-2-oxobutanoate: step 1/4. Functionally, catalyzes the condensation of the acetyl group of acetyl-CoA with 3-methyl-2-oxobutanoate (2-ketoisovalerate) to form 3-carboxy-3-hydroxy-4-methylpentanoate (2-isopropylmalate). The sequence is that of 2-isopropylmalate synthase from Pelotomaculum thermopropionicum (strain DSM 13744 / JCM 10971 / SI).